The sequence spans 119 residues: SGSCEVKTCWKAMPPFRKVGNVLKEKFDGATEVEQKKIGSAKVLVPKNSQFKPHTDEDLVYLDSSPDFCDHDLKNGVLGTAGRQCNKTSKAIDGCELMCCGRGFHTEEVEIVERCSCKF.

Residue serine 1 is the site of O-palmitoleoyl serine; by PORCN attachment. Disulfide bonds link cysteine 69-cysteine 100 and cysteine 85-cysteine 95. N-linked (GlcNAc...) asparagine glycosylation is present at asparagine 86.

It belongs to the Wnt family. Palmitoleoylation is required for efficient binding to frizzled receptors. Depalmitoleoylation leads to Wnt signaling pathway inhibition.

The protein localises to the secreted. Its subcellular location is the extracellular space. It localises to the extracellular matrix. Its function is as follows. Ligand for members of the frizzled family of seven transmembrane receptors. Plays an important role in embryonic development. In Plethodon jordani (Red-cheeked salamander), this protein is Protein Wnt-4 (WNT-4).